The chain runs to 545 residues: MAAYAWLYCALALGATWYLQRYLRQRDAYSVLRNIPGPPSYSWAKGHINQYFNPRGQAFHEEVALNYGSVVKLDGMFGSKLFYVADPKALHTILIKEENTWEEPDAFLALNQLMFGDCLVGTLGEHHRRQRKMLNPVFSVNHMRHMLPIFYNVILKLREVILAKVKAGESEIDVLEWSGRAALELIGQGGLGYSFDPLLVNSESRNEYGDALKSCFPALSKVDILRRYAHYLIKMGPRWFRRSVVDMYPNPDVQNIKEVVDTMSAKSYEIFNQKKVALKRGDEAVLRQVGEGKDIMSILIKANTAASEDERLPESELIAQMSLLVFAATDTTSNTLARILQLLAEHQEIQVKLRDEILQSSAGGNDISYEELNRLRLLDAVCRETLRLFPPVTTLRRVPRKDSVLPLSEPIYGVDGRVINEIPVAKGTDVIIGTYGVNVRKQLWGEDSLEWKPERWLSPLPSAVTAAAIPGVYSNIMTFLGGKRACIGFKFSEMEMKVVLAVMLSTFTFERTEKVIQWNIAGVSYPTVEGNSQPQLPLKMGLYRP.

Residues 1–14 form the signal peptide; the sequence is MAAYAWLYCALALG. Cys-486 contacts heme.

It belongs to the cytochrome P450 family. The cofactor is heme.

It functions in the pathway secondary metabolite biosynthesis. Its function is as follows. Cytochrome P450 monooxygenase that is able to use anthracene and pyrene as substrates for oxidation. This chain is Cytochrome P450 monooxygenase 212, found in Postia placenta (strain ATCC 44394 / Madison 698-R) (Brown rot fungus).